Reading from the N-terminus, the 348-residue chain is Outer membrane protein A (348 aa).

The N-terminal stretch at 1–21 (MKKTAIAIAVALAGFATVAQA) is a signal peptide. A run of 8 beta stranded transmembrane segments spans residues 27–37 (TWYTGAKLGWS), 55–66 (QLGAGAFGGYQV), 70–78 (VGFEMGYDW), 96–107 (QGVQLTAKLGYP), 112–120 (LDIYTRLGG), 146–155 (PVFAGGVEYA), 160–167 (IATRLEYQ), and 186–194 (LLSLGVSYR). The hinge-like stretch occupies residues 201 to 210 (APVVAPAPAP). A run of 3 repeats spans residues 205-206 (AP), 207-208 (AP), and 209-210 (AP). A 3 X 2 AA tandem repeats of A-P region spans residues 205-210 (APAPAP). In terms of domain architecture, OmpA-like spans 212-340 (VQTKHFTLKS…RVEIEVKGIK (129 aa)). A disulfide bridge connects residues cysteine 313 and cysteine 325.

This sequence belongs to the outer membrane OOP (TC 1.B.6) superfamily. OmpA family. Monomer and homodimer. As to quaternary structure, (Microbial infection) Upon infection with phage Sf6 associates with the mature bacteriophage capsid. Was originally suggested to be within the bacteriophage capsid. This has been disproven.

It is found in the extracellular vesicle. Its subcellular location is the cell outer membrane. Functionally, with TolR probably plays a role in maintaining the position of the peptidoglycan cell wall in the periplasm. Acts as a porin with low permeability that allows slow penetration of small solutes; an internal gate slows down solute passage. Its function is as follows. Required for conjugation with F-type plasmids; probably serves as the mating receptor on recipient cells. (Microbial infection) Serves as a secondary receptor during phage Sf6 infection; infection requires both lipopolysaccharide (LPS) and the OmpA beta-barrel. The chain is Outer membrane protein A from Shigella flexneri.